The chain runs to 826 residues: MKMKHFTRLLSLFFILITSLSLAKSTIVSHDERAITINGKRRILLSGSIHYPRSTADMWPDLINKAKDGGLDAIETYVFWNAHEPKRREYDFSGNLDVVRFIKTIQDAGLYSVLRIGPYVCAEWNYGGFPVWLHNMPNMKFRTVNPSFMNEMQNFTTKIVKMMKEEKLFASQGGPIILAQIENEYGNVISSYGAEGKAYIDWCANMANSLDIGVPWLMCQQPNAPQPMLETCNGFYCDQYEPTNPSTPKMWTENWTGWFKNWGGKHPYRTAEDLAFSVARFFQTGGTFQNYYMYHGGTNFGRVAGGPYITTSYDYHAPLDEFGNLNQPKWGHLKQLHTVLKSMEKSLTYGNISRIDLGNSIKATIYTTKEGSSCFIGNVNATADALVNFKGKDYHVPAWSVSVLPDCDKEAYNTAKVNTQTSIMTEDSSKPERLEWTWRPESAQKMILKGSGDLIAKGLVDQKDVTNDASDYLWYMTRLHLDKKDPLWSRNMTLRVHSNAHVLHAYVNGKYVGNQFVKDGKFDYRFERKVNHLVHGTNHISLLSVSVGLQNYGPFFESGPTGINGPVSLVGYKGEETIEKDLSQHQWDYKIGLNGYNDKLFSIKSVGHQKWANEKLPTGRMLTWYKAKFKAPLGKEPVIVDLNGLGKGEAWINGQSIGRYWPSFNSSDDGCKDECDYRGAYGSDKCAFMCGKPTQRWYHVPRSFLNASGHNTITLFEEMGGNPSMVNFKTVVVGTVCARAHEHNKVELSCHNRPISAVKFASFGNPLGHCGSFAVGTCQGDKDAAKTVAKECVGKLNCTVNVSSDTFGSTLDCGDSPKKLAVELEC.

Positions 1–25 are cleaved as a signal peptide; that stretch reads MKMKHFTRLLSLFFILITSLSLAKS. Asparagine 154 carries an N-linked (GlcNAc...) asparagine glycan. Glutamate 184 (proton donor) is an active-site residue. Glutamate 253 functions as the Nucleophile in the catalytic mechanism. Asparagine 254, asparagine 351, asparagine 380, asparagine 491, asparagine 665, asparagine 706, asparagine 797, and asparagine 801 each carry an N-linked (GlcNAc...) asparagine glycan. Residues 740–826 enclose the SUEL-type lectin domain; sequence AHEHNKVELS…PKKLAVELEC (87 aa).

Belongs to the glycosyl hydrolase 35 family. Expressed in flowers.

It localises to the secreted. Its subcellular location is the extracellular space. The protein localises to the apoplast. It catalyses the reaction Hydrolysis of terminal non-reducing beta-D-galactose residues in beta-D-galactosides.. The sequence is that of Beta-galactosidase 7 (BGAL7) from Arabidopsis thaliana (Mouse-ear cress).